The sequence spans 329 residues: COP9 signalosome complex subunit 6 (329 aa).

In terms of domain architecture, MPN spans 44-175; it reads TRVKAQAACS…VTIYESELHV (132 aa).

The protein belongs to the peptidase M67A family. CSN6 subfamily. As to quaternary structure, component of the CSN complex, probably composed of CSN1, CSN2, CSN3, CSN4, CSN5, CSN6, CSN7 and CSN8.

Its function is as follows. Component of the COP9 signalosome complex (CSN), a complex involved in various cellular and developmental processes such as photomorphogenesis and response to hormones. The CSN complex is an essential regulator of the ubiquitin (Ubl) conjugation pathway by mediating the deneddylation of the cullin subunits of SCF-type E3 ligase complexes, leading to decrease the Ubl ligase activity of SCF. Involved in early response to iron deficiency. The protein is COP9 signalosome complex subunit 6 of Oryza sativa subsp. japonica (Rice).